Here is a 415-residue protein sequence, read N- to C-terminus: Adenylosuccinate synthetase (415 aa).

GTP-binding positions include 11-17 (GDEGKGK) and 39-41 (GHT). Catalysis depends on Asp-12, which acts as the Proton acceptor. Positions 12 and 39 each coordinate Mg(2+). IMP contacts are provided by residues 12–15 (DEGK), 37–40 (NAGH), Thr-124, Arg-138, Gln-218, Thr-233, and Arg-297. The active-site Proton donor is His-40. 293 to 299 (TTTGRAR) contributes to the substrate binding site. Residues Arg-299, 325 to 327 (KLD), and 403 to 405 (STS) each bind GTP.

The protein belongs to the adenylosuccinate synthetase family. Homodimer. Requires Mg(2+) as cofactor.

It localises to the cytoplasm. It carries out the reaction IMP + L-aspartate + GTP = N(6)-(1,2-dicarboxyethyl)-AMP + GDP + phosphate + 2 H(+). It functions in the pathway purine metabolism; AMP biosynthesis via de novo pathway; AMP from IMP: step 1/2. Its function is as follows. Plays an important role in the de novo pathway of purine nucleotide biosynthesis. Catalyzes the first committed step in the biosynthesis of AMP from IMP. In Helicobacter hepaticus (strain ATCC 51449 / 3B1), this protein is Adenylosuccinate synthetase.